The chain runs to 346 residues: 4-hydroxy-3-methylbut-2-enyl diphosphate reductase (346 aa).

C19 contributes to the [4Fe-4S] cluster binding site. Residues H48 and H84 each coordinate (2E)-4-hydroxy-3-methylbut-2-enyl diphosphate. Positions 48 and 84 each coordinate dimethylallyl diphosphate. H48 and H84 together coordinate isopentenyl diphosphate. C106 lines the [4Fe-4S] cluster pocket. Position 134 (H134) interacts with (2E)-4-hydroxy-3-methylbut-2-enyl diphosphate. H134 is a binding site for dimethylallyl diphosphate. Isopentenyl diphosphate is bound at residue H134. E136 functions as the Proton donor in the catalytic mechanism. (2E)-4-hydroxy-3-methylbut-2-enyl diphosphate is bound at residue T175. Residue C205 coordinates [4Fe-4S] cluster. Residues S233, S234, N235, and S278 each coordinate (2E)-4-hydroxy-3-methylbut-2-enyl diphosphate. The dimethylallyl diphosphate site is built by S233, S234, N235, and S278. Residues S233, S234, N235, and S278 each contribute to the isopentenyl diphosphate site.

Belongs to the IspH family. [4Fe-4S] cluster is required as a cofactor.

The enzyme catalyses isopentenyl diphosphate + 2 oxidized [2Fe-2S]-[ferredoxin] + H2O = (2E)-4-hydroxy-3-methylbut-2-enyl diphosphate + 2 reduced [2Fe-2S]-[ferredoxin] + 2 H(+). It catalyses the reaction dimethylallyl diphosphate + 2 oxidized [2Fe-2S]-[ferredoxin] + H2O = (2E)-4-hydroxy-3-methylbut-2-enyl diphosphate + 2 reduced [2Fe-2S]-[ferredoxin] + 2 H(+). It participates in isoprenoid biosynthesis; dimethylallyl diphosphate biosynthesis; dimethylallyl diphosphate from (2E)-4-hydroxy-3-methylbutenyl diphosphate: step 1/1. The protein operates within isoprenoid biosynthesis; isopentenyl diphosphate biosynthesis via DXP pathway; isopentenyl diphosphate from 1-deoxy-D-xylulose 5-phosphate: step 6/6. Functionally, catalyzes the conversion of 1-hydroxy-2-methyl-2-(E)-butenyl 4-diphosphate (HMBPP) into a mixture of isopentenyl diphosphate (IPP) and dimethylallyl diphosphate (DMAPP). Acts in the terminal step of the DOXP/MEP pathway for isoprenoid precursor biosynthesis. The sequence is that of 4-hydroxy-3-methylbut-2-enyl diphosphate reductase from Brucella melitensis biotype 1 (strain ATCC 23456 / CCUG 17765 / NCTC 10094 / 16M).